The chain runs to 569 residues: Urease subunit alpha (569 aa).

Positions 131–569 (GSIDTHIHFI…VPMAQKYFLL (439 aa)) constitute a Urease domain. Ni(2+) is bound by residues H136, H138, and K219. Position 219 is an N6-carboxylysine (K219). H221 lines the substrate pocket. H248 and H274 together coordinate Ni(2+). The active-site Proton donor is H322. Position 362 (D362) interacts with Ni(2+).

Belongs to the metallo-dependent hydrolases superfamily. Urease alpha subunit family. As to quaternary structure, heterotrimer of UreA (gamma), UreB (beta) and UreC (alpha) subunits. Two heterotrimers associate to form the active enzyme. In most bacteria it is thought that three heterotrimers form the active enzyme. The cofactor is Ni cation. Carboxylation allows a single lysine to coordinate two nickel ions.

The protein resides in the cytoplasm. It carries out the reaction urea + 2 H2O + H(+) = hydrogencarbonate + 2 NH4(+). It functions in the pathway nitrogen metabolism; urea degradation; CO(2) and NH(3) from urea (urease route): step 1/1. With respect to regulation, inhibited by HgCl2 and acetohydroxyamic acid slightly by EDTA, but not by boric acid or L-methionine-DL-sulfoximine. The chain is Urease subunit alpha from Prochlorococcus marinus subsp. pastoris (strain PCC 9511).